Reading from the N-terminus, the 1006-residue chain is Collagen alpha-2(I) chain (1006 aa).

The disordered stretch occupies residues 1–84 (SGGFDFSFLP…GFPGTPGLPG (84 aa)). 4-hydroxyproline is present on residues Pro-10, Pro-13, Pro-35, and Pro-41. Over residues 28–64 (LMGPRGPPGASGAPGPQGFQGPAGEPGEPGQTGPAGA) the composition is skewed to low complexity. Lys-86 bears the 5-hydroxylysine; alternate mark. O-linked (Gal...) hydroxylysine; alternate glycosylation occurs at Lys-86. The segment at 99-1006 (GQPGAAGVKG…FGYEGDFYRA (908 aa)) is disordered. Composition is skewed to low complexity over residues 142–163 (SRGS…SAGP) and 209–230 (PGAN…AGAP). The span at 264 to 273 (GESGGKGEPG) shows a compositional bias: gly residues. Residues 274–284 (SAGPQGPPGSS) are compositionally biased toward low complexity. Gly residues predominate over residues 306–315 (GLRGGPGSRG). A compositionally biased stretch (low complexity) spans 328 to 344 (PAGARGASGPAGVRGPS). Residues Pro-350 and Pro-353 each carry the 4-hydroxyproline modification. Over residues 379–398 (LPGIDGRPGPIGPAGARGEA) the composition is skewed to low complexity. Residues 447–456 (GVQGGKGEQG) are compositionally biased toward gly residues. 2 stretches are compositionally biased toward low complexity: residues 503-520 (PGES…SRGP) and 532-542 (EPGVVGAPGTA). A compositionally biased stretch (gly residues) spans 543–552 (GPAGSGGLPG). 2 stretches are compositionally biased toward low complexity: residues 585–615 (AVGA…PRGS) and 622–642 (VGPA…QPGA). Residues 643–652 (KGERGTKGPK) are compositionally biased toward basic and acidic residues. Low complexity predominate over residues 660–670 (PTGPVGSAGPA). Over residues 680–689 (GSRGDGGPPG) the composition is skewed to gly residues. Residues 691 to 700 (TGFPGAAGRT) show a composition bias toward low complexity. The segment covering 737–746 (GETGAGGPPG) has biased composition (gly residues). 2 stretches are compositionally biased toward low complexity: residues 754 to 781 (SGEP…LGLP) and 789 to 799 (LPGVAGAVGEP). The segment covering 800–810 (GPLGIGPPGAR) has biased composition (gly residues). Residues 837–882 (YAGNPGPVGAAGAPGPHGAVGPAGKHGNRGEPGPVGSAGPVGALGP) show a composition bias toward low complexity. Residues 892-903 (RGDKGEAGDKGP) show a composition bias toward basic and acidic residues. The span at 976 to 988 (SGPPGPPGPPGPP) shows a compositional bias: pro residues.

This sequence belongs to the fibrillar collagen family. As to quaternary structure, trimers of one alpha 2(I) and two alpha 1(I) chains. Interacts (via C-terminus) with TMEM131 (via PapD-L domain); the interaction is direct and is involved in assembly and TRAPPIII ER-to-Golgi transport complex-dependent secretion of collagen. Post-translationally, prolines at the third position of the tripeptide repeating unit (G-X-Y) are hydroxylated in some or all of the chains. As to expression, expressed in bones.

The protein resides in the secreted. The protein localises to the extracellular space. It is found in the extracellular matrix. Its function is as follows. Type I collagen is a member of group I collagen (fibrillar forming collagen). The protein is Collagen alpha-2(I) chain of Choloepus hoffmanni (Hoffmann's two-fingered sloth).